Reading from the N-terminus, the 154-residue chain is MKQVDIFTDGSCLGNPGPGGWAAVLRYAGTQKELGGGFSGTTNNRMEILAVIEGLEALQEPCTVNLYTDSQYVRNAVEKKWLDSWQRNGWKTAARKPVKNKDLWLRLLPLLARHTVKFHWVRGHSGHPENELCDTIARGHASRGGLPPDTQAAG.

The region spanning 1–142 is the RNase H type-1 domain; that stretch reads MKQVDIFTDG…CDTIARGHAS (142 aa). 4 residues coordinate Mg(2+): Asp9, Glu47, Asp69, and Asp134.

Belongs to the RNase H family. In terms of assembly, monomer. Mg(2+) serves as cofactor.

Its subcellular location is the cytoplasm. The catalysed reaction is Endonucleolytic cleavage to 5'-phosphomonoester.. In terms of biological role, endonuclease that specifically degrades the RNA of RNA-DNA hybrids. This is Ribonuclease H from Oleidesulfovibrio alaskensis (strain ATCC BAA-1058 / DSM 17464 / G20) (Desulfovibrio alaskensis).